Reading from the N-terminus, the 324-residue chain is Probable pectinesterase A (324 aa).

A signal peptide spans 1–19 (MYLPSLVLGLLGFGLTAST). The N-linked (GlcNAc...) asparagine glycan is linked to N27. Residue Q142 coordinates substrate. D165 (proton donor) is an active-site residue. The Nucleophile role is filled by D186. The substrate site is built by R246 and W248.

It belongs to the pectinesterase family.

The protein resides in the secreted. The enzyme catalyses [(1-&gt;4)-alpha-D-galacturonosyl methyl ester](n) + n H2O = [(1-&gt;4)-alpha-D-galacturonosyl](n) + n methanol + n H(+). It functions in the pathway glycan metabolism; pectin degradation; 2-dehydro-3-deoxy-D-gluconate from pectin: step 1/5. Functionally, involved in maceration and soft-rotting of plant tissue. The polypeptide is Probable pectinesterase A (pmeA) (Aspergillus fumigatus (strain CBS 144.89 / FGSC A1163 / CEA10) (Neosartorya fumigata)).